The primary structure comprises 143 residues: Large ribosomal subunit protein uL13 (143 aa).

This sequence belongs to the universal ribosomal protein uL13 family. As to quaternary structure, part of the 50S ribosomal subunit.

This protein is one of the early assembly proteins of the 50S ribosomal subunit, although it is not seen to bind rRNA by itself. It is important during the early stages of 50S assembly. The protein is Large ribosomal subunit protein uL13 of Carboxydothermus hydrogenoformans (strain ATCC BAA-161 / DSM 6008 / Z-2901).